A 224-amino-acid chain; its full sequence is (S)-2-haloacid dehalogenase H-109 (224 aa).

Asp-10 serves as the catalytic Nucleophile. Residues Leu-11–Tyr-12, Arg-41, and Ser-118–Asn-119 each bind an (S)-2-haloacid. The interval Ser-175–Asp-180 is important for catalytic activity.

The protein belongs to the HAD-like hydrolase superfamily. S-2-haloalkanoic acid dehalogenase family.

The enzyme catalyses an (S)-2-haloacid + H2O = a (2R)-2-hydroxycarboxylate + a halide anion + H(+). It carries out the reaction (S)-2-chloropropanoate + H2O = (R)-lactate + chloride + H(+). In terms of biological role, catalyzes the hydrolytic dehalogenation of small (S)-2-haloalkanoic acids to yield the corresponding (R)-2-hydroxyalkanoic acids. Acts on acids of short chain lengths, C(2) to C(4), with inversion of configuration at C-2. Active with 2-halogenated carboxylic acids and converts only the S-isomer (or L-isomer) of 2-chloropropionic acid with inversion of configuration to produce R-lactate (or D-isomer). In Pseudomonas putida (Arthrobacter siderocapsulatus), this protein is (S)-2-haloacid dehalogenase H-109.